The following is a 134-amino-acid chain: Replication enhancer protein (134 aa).

The protein belongs to the geminiviridae replication enhancer protein family. In terms of assembly, homooligomer. Interacts with the replication-associated protein (REP). Interacts with host proliferating cell nuclear antigen (PCNA). Interacts with host retinoblastoma-related protein 1 (RBR1), and may thereby deregulate the host cell cycle. Oligomerization and interaction with PCNA are necessary for optimal replication enhancement.

In terms of biological role, increases viral DNA accumulation. Enhances infectivity and symptom expression. The chain is Replication enhancer protein from Squash leaf curl virus (SLCV).